Reading from the N-terminus, the 431-residue chain is 5-methylthioadenosine/S-adenosylhomocysteine deaminase (431 aa).

Residues H60 and H62 each contribute to the Zn(2+) site. Substrate-binding residues include E89 and H182. H209 is a Zn(2+) binding site. Residues E212 and D297 each contribute to the substrate site. Residue D297 participates in Zn(2+) binding.

It belongs to the metallo-dependent hydrolases superfamily. MTA/SAH deaminase family. Zn(2+) serves as cofactor.

The catalysed reaction is S-adenosyl-L-homocysteine + H2O + H(+) = S-inosyl-L-homocysteine + NH4(+). It catalyses the reaction S-methyl-5'-thioadenosine + H2O + H(+) = S-methyl-5'-thioinosine + NH4(+). Its function is as follows. Catalyzes the deamination of 5-methylthioadenosine and S-adenosyl-L-homocysteine into 5-methylthioinosine and S-inosyl-L-homocysteine, respectively. Is also able to deaminate adenosine. The protein is 5-methylthioadenosine/S-adenosylhomocysteine deaminase of Natronomonas pharaonis (strain ATCC 35678 / DSM 2160 / CIP 103997 / JCM 8858 / NBRC 14720 / NCIMB 2260 / Gabara) (Halobacterium pharaonis).